The chain runs to 219 residues: MLGLHGRKPAQVIVEPVAKLMIKLKVTPNQLTLVSAGLTVGVALLLIPTGHLIWAAVLTGLFAAFDMIDGTVARMQGGGTKFGATLDATCDRITDGALFGAITWWLVYSYDAPQALVAASLVCLVASQVISYVKARGEASGFTMDGGLVERPERLIVSLVGLGLTGMGVPYAIDVALWALAAGSIYTVVQRLVMAGKSPLAKEFTKAPAGAKADYSNTK.

29-32 (NQLT) is a binding site for a CDP-1,2-diacyl-sn-glycerol. 2 consecutive transmembrane segments (helical) span residues 31–47 (LTLV…LLLI) and 53–72 (IWAA…DGTV). Residues Asp66 and Asp69 each coordinate Mg(2+). 3 residues coordinate a CDP-1,2-diacyl-sn-glycerol: Gly70, Arg74, and Thr80. Residues Asp87 and Asp91 each contribute to the Mg(2+) site. Asp91 acts as the Proton acceptor in catalysis. 4 consecutive transmembrane segments (helical) span residues 93–110 (ITDG…VYSY), 116–133 (LVAA…ISYV), 154–171 (RLIV…GVPY), and 177–194 (LWAL…RLVM).

This sequence belongs to the CDP-alcohol phosphatidyltransferase class-I family. Homodimer. The cofactor is Mg(2+).

It localises to the cell membrane. The enzyme catalyses a CDP-1,2-diacyl-sn-glycerol + 1D-myo-inositol 3-phosphate = a 1,2-diacyl-sn-glycero-3-phospho-(1D-myo-inositol-3-phosphate) + CMP + H(+). It catalyses the reaction 1,2-di-(9Z-octadecenoyl)-sn-glycero-3-cytidine-5'-diphosphate + 1D-myo-inositol 3-phosphate = 1,2-di-(9Z-octadecenoyl)-sn-glycero-3-phospho-(1D-myo-inositol-3-phosphate) + CMP + H(+). The protein operates within phospholipid metabolism; phosphatidylinositol phosphate biosynthesis. In terms of biological role, catalyzes the conjugation of the 1'-hydroxyl group of D-myo-inositol-3-phosphate (also named L-myo-inositol-1-phosphate) with a lipid tail of cytidine diphosphate diacylglycerol (CDP-DAG), forming phosphatidylinositol phosphate (PIP) and CMP. PIP is a precursor of phosphatidylinositol (PI) which is an essential lipid required for cell wall formation. In Corynebacterium glutamicum (strain ATCC 13032 / DSM 20300 / JCM 1318 / BCRC 11384 / CCUG 27702 / LMG 3730 / NBRC 12168 / NCIMB 10025 / NRRL B-2784 / 534), this protein is Phosphatidylinositol phosphate synthase.